Reading from the N-terminus, the 302-residue chain is MGKKELKRGLVVDREAQMIGVYLFEDGKTYRGIPRGKVLKKTKINAGDYVWGEVVDPNTFAIEEVEERKNLLIRPKVANVDRVIIVETLKMPEFNNYLLDNMLVVYEYFKVEPVIVFNKIDLLNEEEKKELERMDSIYRDAGYDVLKVSAKTGEGIDELVDYLEGFICILAGPSGVGKSSILSRLTGEELRTQEVSEKTERGRHTTTGVRLIPFGKGSFVGDTPGFSKVEATMFVKPREVRNYFREFLRYQCKYPDCTHTNEPGCAVKEAVKNGEISCERYKSYLKIIKVYLEEIKELCRED.

One can recognise a CP-type G domain in the interval 69–229 (KNLLIRPKVA…VGDTPGFSKV (161 aa)). Residues 118–121 (NKID) and 172–180 (GPSGVGKSS) contribute to the GTP site. Positions 252, 257, 259, and 265 each coordinate Zn(2+).

The protein belongs to the TRAFAC class YlqF/YawG GTPase family. RsgA subfamily. As to quaternary structure, monomer. Associates with 30S ribosomal subunit, binds 16S rRNA. It depends on Zn(2+) as a cofactor.

Its subcellular location is the cytoplasm. In terms of biological role, one of several proteins that assist in the late maturation steps of the functional core of the 30S ribosomal subunit. Helps release RbfA from mature subunits. May play a role in the assembly of ribosomal proteins into the subunit. Circularly permuted GTPase that catalyzes slow GTP hydrolysis, GTPase activity is stimulated by the 30S ribosomal subunit. The polypeptide is Small ribosomal subunit biogenesis GTPase RsgA (Aquifex aeolicus (strain VF5)).